Consider the following 483-residue polypeptide: Probable zinc metalloprotease PTRG_04977 (483 aa).

A signal peptide spans 1–18; the sequence is MLFRSALLSNVLLLPACA. Asparagine 96 and asparagine 121 each carry an N-linked (GlcNAc...) asparagine glycan. Positions 167, 187, and 220 each coordinate Zn(2+). The N-linked (GlcNAc...) asparagine glycan is linked to asparagine 235. Position 247 (aspartate 247) interacts with Zn(2+). Residues asparagine 310, asparagine 362, asparagine 401, asparagine 411, and asparagine 421 are each glycosylated (N-linked (GlcNAc...) asparagine). The region spanning 396-483 is the Fibronectin type-III domain; sequence PAMPRNVTID…KSPAVYPFPG (88 aa).

It belongs to the peptidase M28 family. M28B subfamily. The cofactor is Zn(2+).

The protein localises to the secreted. This chain is Probable zinc metalloprotease PTRG_04977, found in Pyrenophora tritici-repentis (strain Pt-1C-BFP) (Wheat tan spot fungus).